The primary structure comprises 157 residues: Probable succinate transporter subunit YjjB (157 aa).

The next 4 helical transmembrane spans lie at 15-35 (ILAA…VQAL), 50-70 (MILM…SMLV), 87-107 (VFTV…TAMI), and 121-141 (LMIT…ALSV).

Belongs to the ThrE exporter (TC 2.A.79) family. In terms of assembly, the transporter is composed of YjjB and YjjP.

Its subcellular location is the cell inner membrane. Involved in succinate export with YjjP. Both proteins are required for export. The chain is Probable succinate transporter subunit YjjB from Shigella dysenteriae serotype 1 (strain Sd197).